A 159-amino-acid chain; its full sequence is Putative pre-16S rRNA nuclease (159 aa).

It belongs to the YqgF nuclease family.

It localises to the cytoplasm. In terms of biological role, could be a nuclease involved in processing of the 5'-end of pre-16S rRNA. The protein is Putative pre-16S rRNA nuclease of Bartonella henselae (strain ATCC 49882 / DSM 28221 / CCUG 30454 / Houston 1) (Rochalimaea henselae).